The sequence spans 235 residues: tRNA pseudouridine synthase B (235 aa).

Asp-48 acts as the Nucleophile in catalysis.

It belongs to the pseudouridine synthase TruB family. Type 1 subfamily.

It carries out the reaction uridine(55) in tRNA = pseudouridine(55) in tRNA. In terms of biological role, responsible for synthesis of pseudouridine from uracil-55 in the psi GC loop of transfer RNAs. This chain is tRNA pseudouridine synthase B, found in Phocaeicola vulgatus (strain ATCC 8482 / DSM 1447 / JCM 5826 / CCUG 4940 / NBRC 14291 / NCTC 11154) (Bacteroides vulgatus).